The following is a 245-amino-acid chain: Small ribosomal subunit protein uS3 (245 aa).

The region spanning 39-111 is the KH type-2 domain; it reads IRNFINKNYS…EVFFNVIEIK (73 aa).

This sequence belongs to the universal ribosomal protein uS3 family. Part of the 30S ribosomal subunit. Forms a tight complex with proteins S10 and S14.

Binds the lower part of the 30S subunit head. Binds mRNA in the 70S ribosome, positioning it for translation. This Phytoplasma mali (strain AT) protein is Small ribosomal subunit protein uS3.